The following is a 185-amino-acid chain: Casparian strip membrane protein 1 (185 aa).

Topologically, residues 1–32 (MKAVSIEAGERSKAKRVHGVNRGISVFDLVLR) are cytoplasmic. A helical membrane pass occupies residues 33-53 (IVALVGTLASAVAMGTAGQAL). Topologically, residues 54–73 (SFSTQIVNFEAQYDDIDAFK) are extracellular. A helical membrane pass occupies residues 74–94 (FFVVSNSITCVYLALSIPISI). Topologically, residues 95–106 (FHIIRSRAGKSR) are cytoplasmic. A helical transmembrane segment spans residues 107–127 (VLLIVLDAIMLVFLTSGASAA). Over 128–160 (AAIVYLAHNGNTSTNWFSICQQYTDFCQRSAGS) the chain is Extracellular. Asn-138 carries an N-linked (GlcNAc...) asparagine glycan. The chain crosses the membrane as a helical span at residues 161–181 (LIGSFGAMALMVLLIILSSIA). Residues 182–185 (LSRR) lie on the Cytoplasmic side of the membrane.

This sequence belongs to the Casparian strip membrane proteins (CASP) family. Homodimer and heterodimers.

The protein localises to the cell membrane. Its function is as follows. Regulates membrane-cell wall junctions and localized cell wall deposition. Required for establishment of the Casparian strip membrane domain (CSD) and the subsequent formation of Casparian strips, a cell wall modification of the root endodermis that determines an apoplastic barrier between the intraorganismal apoplasm and the extraorganismal apoplasm and prevents lateral diffusion. The sequence is that of Casparian strip membrane protein 1 from Solanum demissum (Wild potato).